The following is a 261-amino-acid chain: DNA repair protein RecO (261 aa).

Belongs to the RecO family.

Involved in DNA repair and RecF pathway recombination. The chain is DNA repair protein RecO from Chlorobium phaeobacteroides (strain DSM 266 / SMG 266 / 2430).